The sequence spans 936 residues: MALSRRDFLKSSAAAAAASAVGLSVPKEVEAASKEAQKGWRWDKAVCRFCGTGCGIMIATKDDRIVAVKGDPLAPVNRGLNCIKGYFTAKIMYGADRLKTPLLRMNDKGEFDKKGKFRPVSWKRAFDEMEKQFRKAYNELGPTGVAFFGSGQYTVMEGYAAAKLMKAGFRSNNIDPNARHCMASAVAGFIQTFGIDEPAGCYDDIELTDTIVLWGSNMAEMHPILWARCTDRKLSDPNKVKVVVLSTYTHRSCDLADDVIIFKPNTDLAIWNYIARSIVYDHPDAIDWNFVKEYCVFATGYPDIGYGMRNPKRAEELGYSKKEMQTVWHQDHKKLSEDEKRALAPFGYGNADVMKMKHVKAAGKHWAISFEEFKKSLEPYTLDYVAKVAKGDPDESLESFKAKLQRLKDLYVEKGRKVVSFWTMGMNQHTRGTWDNELSYVVHFLLGKQALPGSGAFSLTGQPSACGTAREVGTFAHRLPADMVVFNPKHRAIAEKIWKLPKGTINPKVGSHIVKIMRDLEDGKIKFAWVHVCNPWQDTANANHWIKAARDMDNFIVVSDGYPGISAKVADLILPSAMIYEKWGAYGNAERRTQHWRQQVTPVGDAMPDIWQYTEFAKRFKLKDVWKEWKLPDGTVLPNVLDEAKKMGYSEDDTLFDVLFANDYYRSFKWPDPIGEGFLNTEAEGDKRNVIGADGKPWKGYGFFIQKALWEEYRKFGEGRGHDYAPFDVYHKVRGLRWPVVNGKDTPWRFNVNYDPYAKREKELGHVKGEFAFYGHALKVIPQGSLTGPDKNKPKIHLPNKAKIFARPYMEPPEVPDNEYDTWLCTGRVLEHWHSGTMTMRVPELYRAVPEALCYMHPEDAKKRGVKRGDLVVIESRRGKCKARVETRGRNRPPRGLVFVPWFDERVYINLVTLDATCPISKQTDYKKCAVKIYKA.

Residues 1–31 (MALSRRDFLKSSAAAAAASAVGLSVPKEVEA) constitute a signal peptide (tat-type signal). Residues 40-96 (WRWDKAVCRFCGTGCGIMIATKDDRIVAVKGDPLAPVNRGLNCIKGYFTAKIMYGAD) enclose the 4Fe-4S Mo/W bis-MGD-type domain. The [4Fe-4S] cluster site is built by C47, C50, C54, and C82. Residues K84, Q152, N177, C181, 214 to 221 (WGSNMAEM), 246 to 250 (STYTH), M424, Q428, N534, 559 to 560 (SD), K582, D609, and 826 to 835 (TGRVLEHWHS) contribute to the Mo-bis(molybdopterin guanine dinucleotide) site. W902 is a substrate binding site. Positions 910 and 927 each coordinate Mo-bis(molybdopterin guanine dinucleotide).

This sequence belongs to the prokaryotic molybdopterin-containing oxidoreductase family. NasA/NapA/NarB subfamily. In terms of assembly, component of the periplasmic nitrate reductase NapAB complex composed of NapA and NapB. It depends on [4Fe-4S] cluster as a cofactor. Mo-bis(molybdopterin guanine dinucleotide) is required as a cofactor. In terms of processing, predicted to be exported by the Tat system. The position of the signal peptide cleavage has not been experimentally proven.

Its subcellular location is the periplasm. It carries out the reaction 2 Fe(II)-[cytochrome] + nitrate + 2 H(+) = 2 Fe(III)-[cytochrome] + nitrite + H2O. In terms of biological role, catalytic subunit of the periplasmic nitrate reductase complex NapAB. Receives electrons from NapB and catalyzes the reduction of nitrate to nitrite. This chain is Periplasmic nitrate reductase, found in Nitratiruptor sp. (strain SB155-2).